The sequence spans 368 residues: Protein-glutamate methylesterase/protein-glutamine glutaminase (368 aa).

The 118-residue stretch at 9–126 (RVLVVDDSAF…SINMRELKDE (118 aa)) folds into the Response regulatory domain. The residue at position 60 (Asp60) is a 4-aspartylphosphate. The 194-residue stretch at 161 to 354 (SVPARIAVAI…ETVVRAVEMI (194 aa)) folds into the CheB-type methylesterase domain. Residues Ser173, His200, and Asp296 contribute to the active site.

Belongs to the CheB family. Post-translationally, phosphorylated by CheA. Phosphorylation of the N-terminal regulatory domain activates the methylesterase activity.

It is found in the cytoplasm. The catalysed reaction is [protein]-L-glutamate 5-O-methyl ester + H2O = L-glutamyl-[protein] + methanol + H(+). The enzyme catalyses L-glutaminyl-[protein] + H2O = L-glutamyl-[protein] + NH4(+). In terms of biological role, involved in chemotaxis. Part of a chemotaxis signal transduction system that modulates chemotaxis in response to various stimuli. Catalyzes the demethylation of specific methylglutamate residues introduced into the chemoreceptors (methyl-accepting chemotaxis proteins or MCP) by CheR. Also mediates the irreversible deamidation of specific glutamine residues to glutamic acid. In Pyrococcus abyssi (strain GE5 / Orsay), this protein is Protein-glutamate methylesterase/protein-glutamine glutaminase.